The primary structure comprises 547 residues: DNA mismatch repair protein MutL (547 aa).

This sequence belongs to the DNA mismatch repair MutL/HexB family.

Functionally, this protein is involved in the repair of mismatches in DNA. It is required for dam-dependent methyl-directed DNA mismatch repair. May act as a 'molecular matchmaker', a protein that promotes the formation of a stable complex between two or more DNA-binding proteins in an ATP-dependent manner without itself being part of a final effector complex. This chain is DNA mismatch repair protein MutL, found in Deinococcus radiodurans (strain ATCC 13939 / DSM 20539 / JCM 16871 / CCUG 27074 / LMG 4051 / NBRC 15346 / NCIMB 9279 / VKM B-1422 / R1).